The chain runs to 345 residues: Guanine nucleotide-binding protein G(i) subunit alpha-3 (345 aa).

The G-alpha domain maps to Lys23–Tyr345. The G1 motif stretch occupies residues Lys26 to Thr39. GTP-binding residues include Gly33, Glu34, Ser35, Gly36, Lys37, Ser38, Thr39, Asp141, Ser142, Leu166, Arg167, Thr168, Arg169, Val170, Lys171, Thr172, Val192, Gly194, Asn260, Lys261, Asp263, Leu264, Cys316, Ala317, and Thr318. Ser38 lines the Mg(2+) pocket. Positions Asp164–Thr172 are G2 motif. A Mg(2+)-binding site is contributed by Thr172. The segment at Phe187 to Arg196 is G3 motif. The tract at residues Ile256–Asp263 is G4 motif. Residues Thr315 to Thr320 are G5 motif.

The protein belongs to the G-alpha family. G(i/o/t/z) subfamily. Heterotrimeric G proteins are composed of 3 units; alpha, beta and gamma. The alpha subunit contains the guanine nucleotide binding site. GTP binding causes dissociation of the heterotrimer, liberating the individual subunits so that they can interact with downstream effector proteins.

The protein localises to the cytoplasm. Its subcellular location is the cell membrane. It is found in the cytoskeleton. The protein resides in the microtubule organizing center. It localises to the centrosome. The protein localises to the membrane. Its function is as follows. Heterotrimeric guanine nucleotide-binding proteins (G proteins) function as transducers downstream of G protein-coupled receptors (GPCRs) in numerous signaling cascades. The alpha chain contains the guanine nucleotide binding site and alternates between an active, GTP-bound state and an inactive, GDP-bound state. Signaling by an activated GPCR promotes GDP release and GTP binding. The alpha subunit has a low GTPase activity that converts bound GTP to GDP, thereby terminating the signal. Both GDP release and GTP hydrolysis are modulated by numerous regulatory proteins. Signaling is mediated via effector proteins, such as adenylate cyclase. Inhibits adenylate cyclase activity, leading to decreased intracellular cAMP levels. Stimulates the activity of receptor-regulated K(+) channels. The active GTP-bound form prevents the association of RGS14 with centrosomes and is required for the translocation of RGS14 from the cytoplasm to the plasma membrane. May play a role in cell division. The active GTP-bound form activates the calcium permeant TRPC5 ion channels. The sequence is that of Guanine nucleotide-binding protein G(i) subunit alpha-3 (gnai3) from Xenopus laevis (African clawed frog).